We begin with the raw amino-acid sequence, 182 residues long: Protein Syd (182 aa).

It belongs to the Syd family.

The protein resides in the cell inner membrane. In terms of biological role, interacts with the SecY protein in vivo. May bind preferentially to an uncomplexed state of SecY, thus functioning either as a chelating agent for excess SecY in the cell or as a regulatory factor that negatively controls the translocase function. This Aeromonas salmonicida (strain A449) protein is Protein Syd.